The sequence spans 391 residues: Nuclear hormone receptor family member nhr-115 (391 aa).

Residues 5-77 (LFPCQICGQN…IGMDASKFQY (73 aa)) constitute a DNA-binding region (nuclear receptor). An NR C4-type zinc finger spans residues 8–28 (CQICGQNSHGTHFGIVSCRAC). Residues 41-65 (ARKGCLTNFKDKGSCFCKPCRLRKC) form an NR C4-type; atypical zinc finger. In terms of domain architecture, NR LBD spans 130 to 388 (YLDHGCETPI…FSHPEMFDDS (259 aa)).

This sequence belongs to the nuclear hormone receptor family.

It is found in the nucleus. In terms of biological role, orphan nuclear receptor. The polypeptide is Nuclear hormone receptor family member nhr-115 (nhr-115) (Caenorhabditis elegans).